A 419-amino-acid polypeptide reads, in one-letter code: Serine hydroxymethyltransferase (419 aa).

Residues leucine 121 and 125–127 (GHL) each bind (6S)-5,6,7,8-tetrahydrofolate. Lysine 229 carries the N6-(pyridoxal phosphate)lysine modification. (6S)-5,6,7,8-tetrahydrofolate is bound at residue 354 to 356 (SPF).

It belongs to the SHMT family. Homodimer. Requires pyridoxal 5'-phosphate as cofactor.

Its subcellular location is the cytoplasm. It carries out the reaction (6R)-5,10-methylene-5,6,7,8-tetrahydrofolate + glycine + H2O = (6S)-5,6,7,8-tetrahydrofolate + L-serine. The protein operates within one-carbon metabolism; tetrahydrofolate interconversion. It participates in amino-acid biosynthesis; glycine biosynthesis; glycine from L-serine: step 1/1. Functionally, catalyzes the reversible interconversion of serine and glycine with tetrahydrofolate (THF) serving as the one-carbon carrier. This reaction serves as the major source of one-carbon groups required for the biosynthesis of purines, thymidylate, methionine, and other important biomolecules. Also exhibits THF-independent aldolase activity toward beta-hydroxyamino acids, producing glycine and aldehydes, via a retro-aldol mechanism. This is Serine hydroxymethyltransferase from Coxiella burnetii (strain RSA 331 / Henzerling II).